The following is a 399-amino-acid chain: Elongation factor Tu (399 aa).

The 200-residue stretch at 10-209 folds into the tr-type G domain; sequence KPHVNIGTIG…AVDSYIPTPT (200 aa). Residues 19–26 form a G1 region; that stretch reads GHVDHGKT. 19–26 lines the GTP pocket; the sequence is GHVDHGKT. Mg(2+) is bound at residue Thr26. Residues 60 to 64 are G2; it reads GITIA. A G3 region spans residues 81–84; that stretch reads DCPG. GTP contacts are provided by residues 81–85 and 136–139; these read DCPGH and NKAD. The segment at 136–139 is G4; that stretch reads NKAD. Residues 174–176 form a G5 region; the sequence is SAL.

This sequence belongs to the TRAFAC class translation factor GTPase superfamily. Classic translation factor GTPase family. EF-Tu/EF-1A subfamily. Monomer.

Its subcellular location is the cytoplasm. The catalysed reaction is GTP + H2O = GDP + phosphate + H(+). Functionally, GTP hydrolase that promotes the GTP-dependent binding of aminoacyl-tRNA to the A-site of ribosomes during protein biosynthesis. This Campylobacter jejuni (strain RM1221) protein is Elongation factor Tu.